Here is a 403-residue protein sequence, read N- to C-terminus: Glucosyl-3-phosphoglycerate synthase (403 aa).

Asp150 is a binding site for a divalent metal cation. 189-192 (GRVT) is a binding site for (2R)-3-phosphoglycerate. His273 lines the a divalent metal cation pocket.

The protein belongs to the glycosyltransferase 2 family. In terms of assembly, homodimer. Requires Mn(2+) as cofactor. Co(2+) is required as a cofactor. The cofactor is Mg(2+). Ni(2+) serves as cofactor.

It carries out the reaction an NDP-alpha-D-glucose + (2R)-3-phosphoglycerate = (2R)-2-O-(alpha-D-glucopyranosyl)-3-phospho-glycerate + a ribonucleoside 5'-diphosphate + H(+). In terms of biological role, involved in the biosynthesis of 6-O-methylglucose lipopolysaccarides (MGLPs). Catalyzes the transfer of a glucose (Glc) moiety from uridine diphosphate (UDP-Glc) to the position 2 of 3-phospho-D-glycerate (3-PGA) to form glucosyl-3-phosphoglycerate (GPG). GpgS is most active with UDP-glucose, followed by GDP-glucose, ADP-glucose, and to a lesser extent, TDP-glucose. 3-PGA is the only acceptor for these glucosyl donors. The chain is Glucosyl-3-phosphoglycerate synthase from Persephonella marina (strain DSM 14350 / EX-H1).